The following is a 638-amino-acid chain: 3D-(3,5/4)-trihydroxycyclohexane-1,2-dione hydrolase (638 aa).

Thiamine diphosphate is bound at residue glutamate 67. The thiamine pyrophosphate binding stretch occupies residues 442 to 523; sequence SLPGDLQRLW…INIMLFDNSG (82 aa). Aspartate 494 and asparagine 521 together coordinate Mg(2+).

Belongs to the TPP enzyme family. Mg(2+) is required as a cofactor. The cofactor is thiamine diphosphate.

The catalysed reaction is 3D-3,5/4-trihydroxycyclohexane-1,2-dione + H2O = 5-deoxy-D-glucuronate + H(+). It participates in polyol metabolism; myo-inositol degradation into acetyl-CoA; acetyl-CoA from myo-inositol: step 3/7. Functionally, involved in the cleavage of the C1-C2 bond of 3D-(3,5/4)-trihydroxycyclohexane-1,2-dione (THcHDO) to yield 5-deoxy-glucuronate (5DG). This is 3D-(3,5/4)-trihydroxycyclohexane-1,2-dione hydrolase from Listeria monocytogenes serotype 4b (strain F2365).